The sequence spans 215 residues: 2-phospho-L-lactate guanylyltransferase (215 aa).

It belongs to the CofC family. In terms of assembly, homodimer.

It catalyses the reaction (2S)-2-phospholactate + GTP + H(+) = (2S)-lactyl-2-diphospho-5'-guanosine + diphosphate. It functions in the pathway cofactor biosynthesis; coenzyme F420 biosynthesis. In terms of biological role, guanylyltransferase that catalyzes the activation of (2S)-2-phospholactate (2-PL) as (2S)-lactyl-2-diphospho-5'-guanosine, via the condensation of 2-PL with GTP. It is involved in the biosynthesis of coenzyme F420, a hydride carrier cofactor. The chain is 2-phospho-L-lactate guanylyltransferase from Methanococcoides burtonii (strain DSM 6242 / NBRC 107633 / OCM 468 / ACE-M).